Consider the following 21-residue polypeptide: METFCYMKWPVRHHKSRRVSH.

In Escherichia coli (strain K12), this protein is Protein YliM.